The sequence spans 837 residues: MTRVVKALFAADTDCAELLADILTGQNNSGSLYCLLHNCRPEDVSWEVTRLSLCLPVRRPGGAEGRCAEVFKIKLPTEEAGQFLFNCGSLSAKQVYESYSKRAAYETFQPILEVLGLSGDEYSIKNAVTWGRGKFVASLRKYFKLTTSPHWFINTFGAFENHFVLVSSCYYFFPVSVSTVDTLCHLAMLYSSKKGCPLSSITTLRELGAVATQSPALDRVENFYLYVCDKLARDTLECEAVDRCINEFRGQLMLSDQDLVHYIYLSFFQCFNNQKFLAYSQCTNPCNLNTTMLREPMLVANIDSDFKHKMATYYNKNTYLSNYVLLRGIHLHPVVGYGQECLRSAHATGGHSIWWGESHQVSDMLKTINVEYPDICLHEEFRGLMDLAAITDRCSIFGNPIHYLTDCATSGAIPIYRSELSHRHYFLAVFSDDIEYFWKKTIFLPPESFCLGAQDTMLTRAITYTEMHCSMSSVAEQIHVSRHEYFNPKLPVFNWVLDLDLPISEGNLHIDSIYSLCLLIRESVLDILKLLGPVEPDHEVFFFKSACINLCDPGEASWRPSTFCTCTEKLGMRVVTRFPPGICLKGSEPLTQLTKILNRVIKLGCGSLLNLSAFQLSNGPFDVGIYGRGRSIRLPHTYKVGKCGQLERLLKLFVCHPEATDKFPYLQNSLKLNRLLHHAQSQDPRGPLKIIYRVEDINEDFLYKHTQKQLPVKHEAVIPSIERLLDTSLNCFLLSKVWPKCFGTIRSYMSEEKLQQFSRVVFHPTNHCIVQVRPDRGNNFKCLRYNHRGSSKSVRVFLILHLKEETKLIVTFMSQCFANKCQSNKAMAHFSVFVDLS.

A CHC2-type zinc finger spans residues 782–821 (CLRYNHRGSSKSVRVFLILHLKEETKLIVTFMSQCFANKC).

Belongs to the herpesviridae DNA primase family. As to quaternary structure, associates with the helicase and the primase-associated factor to form the helicase-primase factor.

It is found in the host nucleus. Its function is as follows. Essential component of the helicase/primase complex. Unwinds the DNA at the replication forks and generates single-stranded DNA for both leading and lagging strand synthesis. The primase initiates primer synthesis and thereby produces large amount of short RNA primers on the lagging strand that the polymerase elongates using dNTPs. The sequence is that of DNA primase (56) from Connochaetes taurinus (Blue wildebeest).